The chain runs to 396 residues: Tryptophan synthase beta chain (396 aa).

At lysine 88 the chain carries N6-(pyridoxal phosphate)lysine.

This sequence belongs to the TrpB family. In terms of assembly, tetramer of two alpha and two beta chains. Pyridoxal 5'-phosphate is required as a cofactor.

The catalysed reaction is (1S,2R)-1-C-(indol-3-yl)glycerol 3-phosphate + L-serine = D-glyceraldehyde 3-phosphate + L-tryptophan + H2O. It participates in amino-acid biosynthesis; L-tryptophan biosynthesis; L-tryptophan from chorismate: step 5/5. The beta subunit is responsible for the synthesis of L-tryptophan from indole and L-serine. The chain is Tryptophan synthase beta chain from Shewanella sp. (strain MR-7).